The following is a 352-amino-acid chain: Uroporphyrinogen decarboxylase (352 aa).

Substrate-binding positions include 26–30 (RQAGR), Asp76, Tyr153, Ser208, and His323.

This sequence belongs to the uroporphyrinogen decarboxylase family. Homodimer.

It localises to the cytoplasm. The enzyme catalyses uroporphyrinogen III + 4 H(+) = coproporphyrinogen III + 4 CO2. The protein operates within porphyrin-containing compound metabolism; protoporphyrin-IX biosynthesis; coproporphyrinogen-III from 5-aminolevulinate: step 4/4. Functionally, catalyzes the decarboxylation of four acetate groups of uroporphyrinogen-III to yield coproporphyrinogen-III. The protein is Uroporphyrinogen decarboxylase of Prochlorococcus marinus (strain NATL2A).